A 213-amino-acid polypeptide reads, in one-letter code: Octanoyltransferase (213 aa).

The region spanning 27–209 is the BPL/LPL catalytic domain; that stretch reads AATPDEVWLC…RLLAAMPEPA (183 aa). Substrate is bound by residues 66–73, 140–142, and 153–155; these read RGGQVTYH, ALG, and GVA. Cys-171 serves as the catalytic Acyl-thioester intermediate.

This sequence belongs to the LipB family.

It localises to the cytoplasm. It carries out the reaction octanoyl-[ACP] + L-lysyl-[protein] = N(6)-octanoyl-L-lysyl-[protein] + holo-[ACP] + H(+). It functions in the pathway protein modification; protein lipoylation via endogenous pathway; protein N(6)-(lipoyl)lysine from octanoyl-[acyl-carrier-protein]: step 1/2. In terms of biological role, catalyzes the transfer of endogenously produced octanoic acid from octanoyl-acyl-carrier-protein onto the lipoyl domains of lipoate-dependent enzymes. Lipoyl-ACP can also act as a substrate although octanoyl-ACP is likely to be the physiological substrate. The polypeptide is Octanoyltransferase (Bordetella petrii (strain ATCC BAA-461 / DSM 12804 / CCUG 43448)).